The primary structure comprises 491 residues: Glutamyl-tRNA(Gln) amidotransferase subunit A (491 aa).

The active-site Charge relay system is the S158. S182 acts as the Acyl-ester intermediate in catalysis.

It belongs to the amidase family. GatA subfamily. Heterotrimer of A, B and C subunits.

It carries out the reaction L-glutamyl-tRNA(Gln) + L-glutamine + ATP + H2O = L-glutaminyl-tRNA(Gln) + L-glutamate + ADP + phosphate + H(+). Allows the formation of correctly charged Gln-tRNA(Gln) through the transamidation of misacylated Glu-tRNA(Gln) in organisms which lack glutaminyl-tRNA synthetase. The reaction takes place in the presence of glutamine and ATP through an activated gamma-phospho-Glu-tRNA(Gln). The chain is Glutamyl-tRNA(Gln) amidotransferase subunit A from Bradyrhizobium diazoefficiens (strain JCM 10833 / BCRC 13528 / IAM 13628 / NBRC 14792 / USDA 110).